A 548-amino-acid polypeptide reads, in one-letter code: CTP synthase (548 aa).

The tract at residues 1–265 (MTRYIFVTGG…DDIICDKLRI (265 aa)) is amidoligase domain. Position 13 (serine 13) interacts with CTP. Serine 13 contributes to the UTP binding site. ATP-binding positions include 14 to 19 (SLGKGI) and aspartate 71. Mg(2+) contacts are provided by aspartate 71 and glutamate 139. CTP contacts are provided by residues 146–148 (DIE), 186–191 (KTKPTQ), and lysine 222. UTP is bound by residues 186–191 (KTKPTQ) and lysine 222. In terms of domain architecture, Glutamine amidotransferase type-1 spans 290 to 541 (NIAMVGKYME…VNAALAYKAA (252 aa)). Glycine 351 serves as a coordination point for L-glutamine. Residue cysteine 378 is the Nucleophile; for glutamine hydrolysis of the active site. Residues 379-382 (LGMQ), glutamate 402, and arginine 469 contribute to the L-glutamine site. Catalysis depends on residues histidine 514 and glutamate 516.

This sequence belongs to the CTP synthase family. As to quaternary structure, homotetramer.

The enzyme catalyses UTP + L-glutamine + ATP + H2O = CTP + L-glutamate + ADP + phosphate + 2 H(+). It catalyses the reaction L-glutamine + H2O = L-glutamate + NH4(+). It carries out the reaction UTP + NH4(+) + ATP = CTP + ADP + phosphate + 2 H(+). It functions in the pathway pyrimidine metabolism; CTP biosynthesis via de novo pathway; CTP from UDP: step 2/2. Its activity is regulated as follows. Allosterically activated by GTP, when glutamine is the substrate; GTP has no effect on the reaction when ammonia is the substrate. The allosteric effector GTP functions by stabilizing the protein conformation that binds the tetrahedral intermediate(s) formed during glutamine hydrolysis. Inhibited by the product CTP, via allosteric rather than competitive inhibition. Its function is as follows. Catalyzes the ATP-dependent amination of UTP to CTP with either L-glutamine or ammonia as the source of nitrogen. Regulates intracellular CTP levels through interactions with the four ribonucleotide triphosphates. The sequence is that of CTP synthase from Chromohalobacter salexigens (strain ATCC BAA-138 / DSM 3043 / CIP 106854 / NCIMB 13768 / 1H11).